Here is a 362-residue protein sequence, read N- to C-terminus: Heat-inducible transcription repressor HrcA (362 aa).

The protein belongs to the HrcA family.

Functionally, negative regulator of class I heat shock genes (grpE-dnaK-dnaJ and groELS operons). Prevents heat-shock induction of these operons. The chain is Heat-inducible transcription repressor HrcA from Rhodopseudomonas palustris (strain ATCC BAA-98 / CGA009).